We begin with the raw amino-acid sequence, 238 residues long: Protein MIS12 homolog (238 aa).

Residues 117–149 (ELDAELDSLRDKLNVVGKRSVELDSELQALERS) are a coiled coil.

The protein belongs to the mis12 family.

The protein localises to the chromosome. It is found in the centromere. The protein resides in the kinetochore. Constitutive component of kinetochores that is essential for proper cell division during mitotic cell cycle. May play a role in the modulation of centromere during meiosis. In Arabidopsis thaliana (Mouse-ear cress), this protein is Protein MIS12 homolog.